Reading from the N-terminus, the 105-residue chain is Small ribosomal subunit protein uS10 (105 aa).

This sequence belongs to the universal ribosomal protein uS10 family. In terms of assembly, part of the 30S ribosomal subunit.

Involved in the binding of tRNA to the ribosomes. This chain is Small ribosomal subunit protein uS10, found in Aster yellows witches'-broom phytoplasma (strain AYWB).